The following is a 449-amino-acid chain: Delta(8)-fatty-acid desaturase 2 (449 aa).

Residues 7–91 form the Cytochrome b5 heme-binding domain; it reads KRYVTSEDLK…VRDHHVSDVS (85 aa). The heme site is built by histidine 42 and histidine 65. Helical transmembrane passes span 113-133 and 138-158; these read VTLYTLTCVGVMLAAVLYGVL and IWAHLISAVLLGLLWIQSAYV. A Histidine box-1 motif is present at residues 160–164; the sequence is HDSGH. Residues 176–196 form a helical membrane-spanning segment; sequence LIQLLSGNCLTGISIAWWKWT. Residues 197-201 carry the Histidine box-2 motif; it reads HNAHH. A run of 3 helical transmembrane segments spans residues 255–275, 284–304, and 311–331; these read FYPVMCVGRINLFIQTFLLLF, ALNIAGILVFWTWFPLLVSFL, and FIFVFVSFAVTAIQHVQFCLN. Residues 374–378 carry the Histidine box-3 motif; sequence QLEHH.

Belongs to the fatty acid desaturase type 1 family. Requires Fe cation as cofactor. In terms of tissue distribution, highly expressed in flowers and siliques. Expressed at low levels in roots, leaves and stems.

The protein localises to the endoplasmic reticulum membrane. It catalyses the reaction an N-acyl-(4R)-4-hydroxysphinganine + 2 Fe(II)-[cytochrome b5] + O2 + 2 H(+) = a (4R,8E)-4-hydroxysphingenine ceramide + 2 Fe(III)-[cytochrome b5] + 2 H2O. The enzyme catalyses an N-acyl-(4R)-4-hydroxysphinganine + 2 Fe(II)-[cytochrome b5] + O2 + 2 H(+) = a (4R,8Z)-4-hydroxysphing-8-enine ceramide + 2 Fe(III)-[cytochrome b5] + 2 H2O. Functionally, plays a major role as delta(8)-fatty-acid desaturase which introduces a double bond at the 8-position in the long-chain base (LCB) of ceramides with or without a hydroxy group at the 4-position. The enzyme produces both the 8E and 8Z isomers (in a 4:1 ratio). This structural modification contributes to the quantitative partitioning of ceramides between the two major sphingolipid classes, glucosylceramides and glycosylinositolphosphoryl ceramides. Sphingolipids are important membrane components involved in environmental stress responses, such as resistance to chilling, and act as cell signaling molecules. The sequence is that of Delta(8)-fatty-acid desaturase 2 (SLD2) from Arabidopsis thaliana (Mouse-ear cress).